A 190-amino-acid polypeptide reads, in one-letter code: Protein GrpE (190 aa).

Over residues 1-18 (MTETPNTSSEEIQTSEPS) the composition is skewed to polar residues. The tract at residues 1-21 (MTETPNTSSEEIQTSEPSPDN) is disordered.

This sequence belongs to the GrpE family. Homodimer.

The protein localises to the cytoplasm. In terms of biological role, participates actively in the response to hyperosmotic and heat shock by preventing the aggregation of stress-denatured proteins, in association with DnaK and GrpE. It is the nucleotide exchange factor for DnaK and may function as a thermosensor. Unfolded proteins bind initially to DnaJ; upon interaction with the DnaJ-bound protein, DnaK hydrolyzes its bound ATP, resulting in the formation of a stable complex. GrpE releases ADP from DnaK; ATP binding to DnaK triggers the release of the substrate protein, thus completing the reaction cycle. Several rounds of ATP-dependent interactions between DnaJ, DnaK and GrpE are required for fully efficient folding. The sequence is that of Protein GrpE from Chlamydia trachomatis serovar L2 (strain ATCC VR-902B / DSM 19102 / 434/Bu).